Reading from the N-terminus, the 492-residue chain is Heat shock factor protein 4 (492 aa).

The DNA-binding element occupies 17 to 122 (VPAFLGKLWA…LLERVRRKVP (106 aa)). Residues 129 to 203 (SRWRPEDLSR…GPLQTGPSST (75 aa)) are hydrophobic repeat HR-A/B. Residues 245–322 (LPETTLGLSP…ECDFCVTAPP (78 aa)) form an interactions with DUSP26, MAPK1 and MAPK2 region. The tract at residues 263-282 (SDIPEDSPSPEGHRLSPSGG) is disordered. Residue Lys-293 forms a Glycyl lysine isopeptide (Lys-Gly) (interchain with G-Cter in SUMO) linkage. Position 298 is a phosphoserine (Ser-298). The tract at residues 337–378 (GSYSPEGPRSVQQPEPRGPREVPDRGTLGLDRGNRSPESLLP) is disordered. Residues 364-389 (LGLDRGNRSPESLLPPMLLRPAPETL) form a hydrophobic repeat HR-C region.

Belongs to the HSF family. As to quaternary structure, homotrimer. Exhibits constitutive DNA binding and forms trimers even in the absence of stress. Interacts with ALKBH4, DUSP26, MAPK1, MAPK2, MAPK8 and MAP kinase p38. In terms of processing, phosphorylated mainly on serine residues. Phosphorylation on Ser-298 promotes sumoylation on Lys-293. Isoform HSF4B is constitutively sumoylated. Sumoylation represses the transcriptional activity and is promoted by phosphorylation on Ser-298. HSFA is not sumoylated. In terms of tissue distribution, preferentially expressed in brain and lung. Also found in the eye. Slightly detected in liver and skeletal muscle. Isoform B is the major species in various tissues.

The protein localises to the nucleus. Heat-shock transcription factor that specifically binds heat shock promoter elements (HSE). Required for denucleation and organelle rupture and degradation that occur during eye lens terminal differentiation, when fiber cells that compose the lens degrade all membrane-bound organelles in order to provide lens with transparency to allow the passage of light. In this process, may regulate denucleation of lens fiber cells in part by activating DNASE2B transcription. May be involved in DNA repair through the transcriptional regulation of RAD51. May up-regulate p53/TP53 protein in eye lens fiber cells, possibly through protein stabilization. In the eye lens, controls the expression of alpha-crystallin B chain/CRYAB and consequently may be involved in the regulation of lysosomal acidification. In terms of biological role, transcriptional repressor. Functionally, transcriptional activator. The sequence is that of Heat shock factor protein 4 (Hsf4) from Mus musculus (Mouse).